Reading from the N-terminus, the 1525-residue chain is Multidrug resistance-associated protein 1 (1525 aa).

Residues 1–33 (MGIESLCSADASEPFWDWNLTWHTENPDFTQCF) are Extracellular-facing. A helical membrane pass occupies residues 34 to 54 (QNTVLVWVPCIYLWVCFPAYF). The Cytoplasmic portion of the chain corresponds to 55–74 (LYLRSHDRGYIQMSILNKAK). A helical transmembrane segment spans residues 75-95 (TALGLILWIVCWADLFYSFWE). Residues 96-100 (RSQNI) lie on the Extracellular side of the membrane. A helical transmembrane segment spans residues 101–121 (FRAPFFLISPTVLGITMLLAT). The Cytoplasmic segment spans residues 122 to 133 (FLIQHERLKGVQ). Residues 134-154 (SSGVMMIFWLISLLCATVIFR) form a helical membrane-spanning segment. The Extracellular portion of the chain corresponds to 155–172 (SKIMLALNTDTEVDAFRY). Residues 173 to 193 (VTFCTYFILLLVQLILSCFPE) traverse the membrane as a helical segment. Over 194 to 315 (KPPLFSEAVN…RSSEASLSKV (122 aa)) the chain is Cytoplasmic. The helical transmembrane segment at 316–336 (LYKTFGPYFLMSFLFKAAHDL) threads the bilayer. The ABC transmembrane type-1 1 domain occupies 324 to 607 (FLMSFLFKAA…LPMVISSIVE (284 aa)). At 337-362 (LMFTGPEILKLLINFVNNKSAPNWQG) the chain is on the extracellular side. Residues 363–383 (YFYTGLLFVCACLQTLILHQY) traverse the membrane as a helical segment. The Cytoplasmic portion of the chain corresponds to 384–439 (FHICFVTGMRLKTAIVGVIYRKALVITNSARKTSTVGEIVNLMSVDAQRFMDLATY). Residues 440–460 (INMIWSAPLQVILALYLLWRN) traverse the membrane as a helical segment. At 461-463 (LGP) the chain is on the extracellular side. Residues 464 to 484 (SVLAGVAVMILLVPINAVMAM) form a helical membrane-spanning segment. The Cytoplasmic portion of the chain corresponds to 485-546 (KTKTYQVAQM…VLKKSAYLAA (62 aa)). The chain crosses the membrane as a helical span at residues 547-567 (MGTFTWVCAPFLVALSTFAVY). Residues 568 to 589 (VKVNKNNILDAQKAFVSLALFN) lie on the Extracellular side of the membrane. The helical transmembrane segment at 590-610 (ILRFPLNILPMVISSIVEASV) threads the bilayer. The Cytoplasmic segment spans residues 611-961 (SLKRLRVFLS…VKATVYWEYM (351 aa)). The region spanning 641–865 (IVVKNATFSW…DGAFAEFLRT (225 aa)) is the ABC transporter 1 domain. 675–682 (GQVGCGKS) lines the ATP pocket. Polar residues-rich tracts occupy residues 871-882 (QSMESSDASSPS) and 908-928 (SNSSTYSRETGKSQHQSSTAE). Disordered stretches follow at residues 871-891 (QSMESSDASSPSGKEGKPVEN) and 908-930 (SNSSTYSRETGKSQHQSSTAELQ). A helical membrane pass occupies residues 962 to 982 (KAIGLYISFLSVFLFMCNHIA). One can recognise an ABC transmembrane type-1 2 domain in the interval 969–1250 (SFLSVFLFMC…LVRMTSDLET (282 aa)). Over 983-1019 (SLASNYWLSLWTDDPVVNGTQQYTNVRLGVYGALGIS) the chain is Extracellular. The helical transmembrane segment at 1020-1040 (QGIAVFGYSMAVSIGGIFASR) threads the bilayer. Residues 1041-1083 (HLHLDLLHNVLRSPMSFFERTPSGNLVSRFSKEIDTIDSTIPP) are Cytoplasmic-facing. Residues 1084–1104 (IIKMFMGSTFNVIGACIIILL) form a helical membrane-spanning segment. A topological domain (extracellular) is located at residue Ala1105. A helical transmembrane segment spans residues 1106-1126 (TPIAAVVIPPLGLVYLLVQRF). The Cytoplasmic portion of the chain corresponds to 1127 to 1197 (YVATSRQLKR…VANRWLAVRL (71 aa)). A helical transmembrane segment spans residues 1198-1218 (EFVGNCIVLFAALFAVIARNK). The Extracellular segment spans residues 1219 to 1220 (LS). Residues 1221–1241 (PGLIGLSVSYSLQITAYLNWL) form a helical membrane-spanning segment. Topologically, residues 1242–1525 (VRMTSDLETN…YSMAKDSGLA (284 aa)) are cytoplasmic. In terms of domain architecture, ABC transporter 2 spans 1289–1521 (FRGFGLRYRE…KGLFYSMAKD (233 aa)). 1321–1328 (GRTGAGKS) is a binding site for ATP.

The protein belongs to the ABC transporter superfamily. ABCC family. Conjugate transporter (TC 3.A.1.208) subfamily.

It localises to the cell membrane. It carries out the reaction ATP + H2O + xenobioticSide 1 = ADP + phosphate + xenobioticSide 2.. The enzyme catalyses an S-substituted glutathione(in) + ATP + H2O = an S-substituted glutathione(out) + ADP + phosphate + H(+). The catalysed reaction is sphing-4-enine 1-phosphate(in) + ATP + H2O = sphing-4-enine 1-phosphate(out) + ADP + phosphate + H(+). It catalyses the reaction leukotriene C4(in) + ATP + H2O = leukotriene C4(out) + ADP + phosphate + H(+). It carries out the reaction 17beta-estradiol 17-O-(beta-D-glucuronate)(in) + ATP + H2O = 17beta-estradiol 17-O-(beta-D-glucuronate)(out) + ADP + phosphate + H(+). The enzyme catalyses 2',3'-cGAMP(in) + ATP + H2O = 2',3'-cGAMP(out) + ADP + phosphate + H(+). Functionally, mediates export of organic anions and drugs from the cytoplasm. Mediates ATP-dependent transport of glutathione and glutathione conjugates, leukotriene C4, estradiol-17-beta-o-glucuronide and other xenobiotics. Hydrolyzes ATP with low efficiency. Mediates ATP-dependent, GSH-independent cyclic GMP-AMP (cGAMP) export. Thus, by limiting intracellular cGAMP concentrations negatively regulates the cGAS-STING pathway. This is Multidrug resistance-associated protein 1 from Gallus gallus (Chicken).